We begin with the raw amino-acid sequence, 230 residues long: Small ribosomal subunit protein uS3 (230 aa).

The 69-residue stretch at I39–R107 folds into the KH type-2 domain.

The protein belongs to the universal ribosomal protein uS3 family. As to quaternary structure, part of the 30S ribosomal subunit. Forms a tight complex with proteins S10 and S14.

In terms of biological role, binds the lower part of the 30S subunit head. Binds mRNA in the 70S ribosome, positioning it for translation. The polypeptide is Small ribosomal subunit protein uS3 (Psychromonas ingrahamii (strain DSM 17664 / CCUG 51855 / 37)).